The following is a 589-amino-acid chain: Guanylate-binding protein 2 (589 aa).

Residues 1-309 (MASEIHMLQP…GAISSGSLPC (309 aa)) are GTPase domain (Globular). Residues 35 to 276 (NQPVVVVAIV…FTSYIFSYSA (242 aa)) enclose the GB1/RHD3-type G domain. GTP contacts are provided by residues 45–52 (GLYRTGKS), 181–182 (RD), and Leu-245. Cysteine methyl ester is present on Cys-586. Cys-586 is lipidated: S-geranylgeranyl cysteine. The propeptide at 587-589 (TIL) is removed in mature form.

The protein belongs to the TRAFAC class dynamin-like GTPase superfamily. GB1/RHD3 GTPase family. GB1 subfamily. As to quaternary structure, homodimer; homodimerization occurs upon GTP-binding and is required for the association with membranous structures. Heterodimer with other family members, including GBP1, GBP3, GBP4 and GBP5. In terms of processing, isoprenylation is required for proper subcellular location. In terms of tissue distribution, widely expressed.

The protein localises to the cytoplasmic vesicle membrane. The protein resides in the golgi apparatus membrane. It is found in the cytoplasm. It localises to the perinuclear region. It carries out the reaction GTP + H2O = GDP + phosphate + H(+). Its function is as follows. Interferon (IFN)-inducible GTPase that plays important roles in innate immunity against a diverse range of bacterial, viral and protozoan pathogens. Hydrolyzes GTP to GMP in 2 consecutive cleavage reactions, but the major reaction product is GDP. Following infection, recruited to the pathogen-containing vacuoles or vacuole-escaped bacteria and acts as a positive regulator of inflammasome assembly by promoting the release of inflammasome ligands from bacteria. Acts by promoting lysis of pathogen-containing vacuoles, releasing pathogens into the cytosol. Following pathogen release in the cytosol, promotes recruitment of proteins that mediate bacterial cytolysis: this liberates ligands that are detected by inflammasomes, such as lipopolysaccharide (LPS) that activates the non-canonical CASP4/CASP11 inflammasome or double-stranded DNA (dsDNA) that activates the AIM2 inflammasome. Confers protection to the protozoan pathogen Toxoplasma gondii. Independently of its GTPase activity, acts as an inhibitor of various viruses infectivity by inhibiting FURIN-mediated maturation of viral envelope proteins. This chain is Guanylate-binding protein 2 (Gbp2), found in Rattus norvegicus (Rat).